The chain runs to 103 residues: MAKGQSLQDPFLNALRRERVPVSIYLVNGIKLQGQIESFDQFVILLKNTVSQMVYKHAISTVVPSRPVSHHSNNAGGGTGSNFHHGSNAQGSSAPAQDSDETE.

Positions 9–68 (DPFLNALRRERVPVSIYLVNGIKLQGQIESFDQFVILLKNTVSQMVYKHAISTVVPSRPV) constitute a Sm domain. Positions 63 to 103 (VPSRPVSHHSNNAGGGTGSNFHHGSNAQGSSAPAQDSDETE) are disordered. Residues 81-96 (SNFHHGSNAQGSSAPA) show a composition bias toward polar residues.

It belongs to the Hfq family. Homohexamer.

In terms of biological role, RNA chaperone that binds small regulatory RNA (sRNAs) and mRNAs to facilitate mRNA translational regulation in response to envelope stress, environmental stress and changes in metabolite concentrations. Also binds with high specificity to tRNAs. The protein is RNA-binding protein Hfq of Enterobacter sp. (strain 638).